Consider the following 396-residue polypeptide: Deoxyguanosinetriphosphate triphosphohydrolase-like protein (396 aa).

In terms of domain architecture, HD spans 62-198; that stretch reads RLTHSLEVAQ…AALADDIAYN (137 aa).

Belongs to the dGTPase family. Type 2 subfamily.

This chain is Deoxyguanosinetriphosphate triphosphohydrolase-like protein, found in Jannaschia sp. (strain CCS1).